The chain runs to 454 residues: Putative serine carboxypeptidase-like 23 (454 aa).

The N-terminal stretch at 1-22 (MARIHLIIILLVISSTSSSSSS) is a signal peptide. N-linked (GlcNAc...) asparagine glycans are attached at residues N52, N102, and N136. 3 cysteine pairs are disulfide-bonded: C85/C338, C247/C258, and C282/C306. S178 is an active-site residue. Residues N287 and N327 are each glycosylated (N-linked (GlcNAc...) asparagine). Residues D375 and H427 contribute to the active site.

It belongs to the peptidase S10 family. In terms of tissue distribution, expression not detected.

It localises to the secreted. Probable carboxypeptidase. This Arabidopsis thaliana (Mouse-ear cress) protein is Putative serine carboxypeptidase-like 23 (SCPL23).